Here is a 167-residue protein sequence, read N- to C-terminus: Alpha-crystallin A chain (167 aa).

Met1 carries the post-translational modification N-acetylmethionine. The sHSP domain maps to 47 to 158; that stretch reads YYRQSFFRGF…GERPIPVSRE (112 aa). Zn(2+)-binding residues include His94, Glu96, His101, and His148. Residues 143 to 167 are disordered; that stretch reads SLDSSHGERPIPVSREEKPTSAPSS. Over residues 147–161 the composition is skewed to basic and acidic residues; sequence SHGERPIPVSREEKP. An O-linked (GlcNAc) serine glycan is attached at Ser156.

Belongs to the small heat shock protein (HSP20) family. In terms of assembly, heteropolymer composed of three CRYAA and one CRYAB subunits. Inter-subunit bridging via zinc ions enhances stability, which is crucial as there is no protein turn over in the lens. Can also form homodimers and homotetramers (dimers of dimers) which serve as the building blocks of homooligomers. Within homooligomers, the zinc-binding motif is created from residues of 3 different molecules. His-94 and Glu-96 from one molecule are ligands of the zinc ion, and His-101 and His-148 residues from additional molecules complete the site with tetrahedral coordination geometry.

The protein resides in the cytoplasm. Its subcellular location is the nucleus. Contributes to the transparency and refractive index of the lens. May act as a chaperone, preventing aggregation of various proteins under a wide range of stress conditions. The protein is Alpha-crystallin A chain (CRYAA) of Pelophylax lessonae (Pool frog).